A 164-amino-acid polypeptide reads, in one-letter code: Large ribosomal subunit protein uL10 (164 aa).

It belongs to the universal ribosomal protein uL10 family. Part of the ribosomal stalk of the 50S ribosomal subunit. The N-terminus interacts with L11 and the large rRNA to form the base of the stalk. The C-terminus forms an elongated spine to which L12 dimers bind in a sequential fashion forming a multimeric L10(L12)X complex.

In terms of biological role, forms part of the ribosomal stalk, playing a central role in the interaction of the ribosome with GTP-bound translation factors. This is Large ribosomal subunit protein uL10 from Helicobacter pylori (strain G27).